The following is a 231-amino-acid chain: NADH-ubiquinone oxidoreductase chain 4 (231 aa).

Helical transmembrane passes span 1–21, 34–54, 63–85, 89–111, 128–148, 169–189, and 211–231; these read PIAG…YGII, MFLP…LTCL, IAYS…TPWG, AMAL…NTTY, ILPM…ATPP, TIIL…HMFL, and LLMA…ELII.

This sequence belongs to the complex I subunit 4 family.

It localises to the mitochondrion membrane. It catalyses the reaction a ubiquinone + NADH + 5 H(+)(in) = a ubiquinol + NAD(+) + 4 H(+)(out). Functionally, core subunit of the mitochondrial membrane respiratory chain NADH dehydrogenase (Complex I) that is believed to belong to the minimal assembly required for catalysis. Complex I functions in the transfer of electrons from NADH to the respiratory chain. The immediate electron acceptor for the enzyme is believed to be ubiquinone. The polypeptide is NADH-ubiquinone oxidoreductase chain 4 (MT-ND4) (Cerrophidion godmani (Porthidium godmani)).